The sequence spans 662 residues: MFNEKDQLAIDTIRALSIDAIEKANSGHPGLPMGAAPMAYTLWTRHLNFNPQSKDFFNRDRFILSAGHGSALLYSLLHVSGSLELEELKQFRQWGSKTPGHPEYRHTDGVEVTTGPLGQGFAMSVGMALAESHLAGKFNKDQFDIVNHYTYVLASDGDLMEGISHEAASFAGHNQLDKLIVLYDSNDISLDGDLDKSFSEDTKQRFEAYGWNYILVENGNDLDEIDNAITQAKSQQGPTIIEVKTIIGFGSPNKAGSNGVHGAPLGEEERALTFKEYGLDPEKRFNVPEDVYEIFKSTMLKRANENEEAWNNMLKNYSEAYPELAEEFKLAMSGKLPNNYADALPEYDLNHSGASRADSGEIIQKLSEFVPSFFGGSADLAGSNKSNVKEAKDYNKDTPEGKNVWFGVREFAMGAAINGMAAHGGLHPYAATFFVFSDYLKPALRLSSIMGLNSTFIFTHDSIAVGEDGPTHEPIEQLAGLRAIPNMNVIRPADGNETRVAWEVALESEQTPTSLVLTRQNLPTLDVDKQTVENGVRKGAYIVFETEQQLEYLLLASGSEVNLAVEAAKELEQQGKGVRVISMPNWYAFEQQSSEYKESILPSDVTKRIAIEMASPLGWHKYVGIEGKVIGINSFGASAPGDLVVEKYGFTKENILKQVRSL.

Histidine 28 is a binding site for substrate. Thiamine diphosphate contacts are provided by residues histidine 68 and 115 to 117; that span reads GPL. Position 156 (aspartate 156) interacts with Mg(2+). Positions 157 and 186 each coordinate thiamine diphosphate. Residues asparagine 186 and isoleucine 188 each coordinate Mg(2+). Substrate-binding residues include histidine 261, arginine 356, and serine 383. Residue histidine 261 coordinates thiamine diphosphate. The Proton donor role is filled by glutamate 410. Phenylalanine 436 is a thiamine diphosphate binding site. Residues histidine 460, aspartate 468, and arginine 519 each contribute to the substrate site.

Belongs to the transketolase family. In terms of assembly, homodimer. Mg(2+) is required as a cofactor. Requires Ca(2+) as cofactor. Mn(2+) serves as cofactor. The cofactor is Co(2+). It depends on thiamine diphosphate as a cofactor.

It carries out the reaction D-sedoheptulose 7-phosphate + D-glyceraldehyde 3-phosphate = aldehydo-D-ribose 5-phosphate + D-xylulose 5-phosphate. It participates in carbohydrate biosynthesis; Calvin cycle. It functions in the pathway carbohydrate degradation; pentose phosphate pathway. Its function is as follows. Catalyzes the transfer of a two-carbon ketol group from a ketose donor to an aldose acceptor, via a covalent intermediate with the cofactor thiamine pyrophosphate. This Staphylococcus epidermidis (strain ATCC 35984 / DSM 28319 / BCRC 17069 / CCUG 31568 / BM 3577 / RP62A) protein is Transketolase (tkt).